A 479-amino-acid polypeptide reads, in one-letter code: MKYQVVIGLEVHVQLLTNSKIFCGCSTRFGAEPNSQTCPVCLGMPGALPVLNKKVVEYAIRAGLATNCRIAPRSVFARKNYFYPDLPKGYQISQFELPICIDGHLDIEVEGGMKRIGITRIHMEEDAGKLVHADVPGVGDDSCVDLNRACTPLLEIVSEPDMRSADEAVAYLKKLHQIVVYLGISDGNMEEGSFRCDANVSVMPAGSDKFGTRTETKNVNSFKFVKQAIEYEIERQIEVIEEGGKIVQETRLFDPNTGSTRSMRGKEEAHDYRYFPDPDLVPLVIGNDWVEDARLSLPELPDAKRQRYTDELGLPVYDAEVLTATRELAGYFEACLALSPQPKPVANWVMGEVTRALNEENRSIADCPVTPPLLADLLRLIEKGTISGKIAKTVFDEMWRSGKAPEKIVEEKGLVQVSDTGAIEAIIDEVLAKEAGQVEEYRSGKDKLFGFFVGQVMRASKGKANPALVNEILLKKLNG.

It belongs to the GatB/GatE family. GatB subfamily. In terms of assembly, heterotrimer of A, B and C subunits.

The catalysed reaction is L-glutamyl-tRNA(Gln) + L-glutamine + ATP + H2O = L-glutaminyl-tRNA(Gln) + L-glutamate + ADP + phosphate + H(+). The enzyme catalyses L-aspartyl-tRNA(Asn) + L-glutamine + ATP + H2O = L-asparaginyl-tRNA(Asn) + L-glutamate + ADP + phosphate + 2 H(+). Functionally, allows the formation of correctly charged Asn-tRNA(Asn) or Gln-tRNA(Gln) through the transamidation of misacylated Asp-tRNA(Asn) or Glu-tRNA(Gln) in organisms which lack either or both of asparaginyl-tRNA or glutaminyl-tRNA synthetases. The reaction takes place in the presence of glutamine and ATP through an activated phospho-Asp-tRNA(Asn) or phospho-Glu-tRNA(Gln). The protein is Aspartyl/glutamyl-tRNA(Asn/Gln) amidotransferase subunit B of Geotalea uraniireducens (strain Rf4) (Geobacter uraniireducens).